The sequence spans 436 residues: Histidine--tRNA ligase (436 aa).

This sequence belongs to the class-II aminoacyl-tRNA synthetase family.

Its subcellular location is the cytoplasm. It catalyses the reaction tRNA(His) + L-histidine + ATP = L-histidyl-tRNA(His) + AMP + diphosphate + H(+). This is Histidine--tRNA ligase from Thermococcus kodakarensis (strain ATCC BAA-918 / JCM 12380 / KOD1) (Pyrococcus kodakaraensis (strain KOD1)).